The sequence spans 291 residues: Mitochondrial citrate transporter B (291 aa).

3 Solcar repeats span residues 10 to 97 (PQKW…IKNS), 105 to 193 (LSPA…LKES), and 201 to 283 (PTLF…MTYL). 6 helical membrane passes run 16–36 (LIAGGVAGGVEAASTYPFEYA), 74–94 (STLIIGTTAKAAVRFVSYDTI), 112–132 (VAGVVAGATESVLAVTPTERI), 172–192 (TTLKQSATSAVRMGTYNILKE), 203–220 (LFTTFCMGALAGVVTVYA), and 255–276 (FWKGSSMRLGRLLLSGGIVFSV).

Belongs to the mitochondrial carrier (TC 2.A.29) family.

The protein localises to the mitochondrion inner membrane. It carries out the reaction citrate(in) + H(+)(in) = citrate(out) + H(+)(out). Functionally, mitochondrial transporter that mediates citrate export from mitochondria to cytoplasm. Both ctpA, ctpB, and ctpD play important roles in citric acid transport across the mitochondrial membrane and function in a redundant manner. The sequence is that of Mitochondrial citrate transporter B from Aspergillus niger (strain ATCC 1015 / CBS 113.46 / FGSC A1144 / LSHB Ac4 / NCTC 3858a / NRRL 328 / USDA 3528.7).